A 381-amino-acid polypeptide reads, in one-letter code: tRNA-specific 2-thiouridylase MnmA (381 aa).

ATP contacts are provided by residues 9–16 (GMSGGVDS) and methionine 35. The segment at 95-97 (NPD) is interaction with target base in tRNA. Cysteine 100 (nucleophile) is an active-site residue. Residues cysteine 100 and cysteine 196 are joined by a disulfide bond. Glycine 124 lines the ATP pocket. The tract at residues 146-148 (KDQ) is interaction with tRNA. Cysteine 196 (cysteine persulfide intermediate) is an active-site residue. The segment at 308-309 (RY) is interaction with tRNA.

Belongs to the MnmA/TRMU family.

It localises to the cytoplasm. The catalysed reaction is S-sulfanyl-L-cysteinyl-[protein] + uridine(34) in tRNA + AH2 + ATP = 2-thiouridine(34) in tRNA + L-cysteinyl-[protein] + A + AMP + diphosphate + H(+). Its function is as follows. Catalyzes the 2-thiolation of uridine at the wobble position (U34) of tRNA, leading to the formation of s(2)U34. This Paraburkholderia xenovorans (strain LB400) protein is tRNA-specific 2-thiouridylase MnmA.